A 678-amino-acid polypeptide reads, in one-letter code: Penicillin-binding protein activator LpoA (678 aa).

Positions 1–26 are cleaved as a signal peptide; that stretch reads MVPSTFSRLKAARCLPVVLAALIFAG. C27 carries the N-palmitoyl cysteine lipid modification. The S-diacylglycerol cysteine moiety is linked to residue C27. A compositionally biased stretch (low complexity) spans 300 to 310; it reads AADVAEQPQPQ. 2 disordered regions span residues 300-340 and 496-528; these read AADV…PVSA and ALTGSPITPRATTDSGMTTNNPTLQTTPTDDQF. Positions 311–327 are enriched in polar residues; that stretch reads TADSVASPAQASVSDLT. Low complexity-rich tracts occupy residues 330–340 and 513–528; these read QPAAQPVPVSA and TTNNPTLQTTPTDDQF.

This sequence belongs to the LpoA family. Interacts with PBP1a.

Its subcellular location is the cell outer membrane. Regulator of peptidoglycan synthesis that is essential for the function of penicillin-binding protein 1A (PBP1a). The chain is Penicillin-binding protein activator LpoA from Shigella flexneri serotype X (strain 2002017).